Consider the following 474-residue polypeptide: Trehalose-6-phosphate synthase (474 aa).

Arg-10 is a D-glucose 6-phosphate binding site. Position 22–23 (22–23 (GG)) interacts with UDP-alpha-D-glucose. The D-glucose 6-phosphate site is built by Tyr-77 and Asp-131. Arg-263 and Lys-268 together coordinate UDP-alpha-D-glucose. Arg-301 contacts D-glucose 6-phosphate. UDP-alpha-D-glucose is bound by residues Phe-340 and 366-370 (LVAKE).

It belongs to the glycosyltransferase 20 family. In terms of assembly, homotetramer.

It catalyses the reaction D-glucose 6-phosphate + UDP-alpha-D-glucose = alpha,alpha-trehalose 6-phosphate + UDP + H(+). The protein operates within glycan biosynthesis; trehalose biosynthesis. In terms of biological role, probably involved in the osmoprotection via the biosynthesis of trehalose. Catalyzes the transfer of glucose from UDP-alpha-D-glucose (UDP-Glc) to D-glucose 6-phosphate (Glc-6-P) to form trehalose-6-phosphate. Acts with retention of the anomeric configuration of the UDP-sugar donor. This Escherichia coli O157:H7 protein is Trehalose-6-phosphate synthase.